The primary structure comprises 521 residues: MSL complex subunit 3 (521 aa).

The Tudor-knot domain maps to 13–71 (SGEKVLCFEPDPTKARVLYDAKIVDVIVGKDEKGRKIPEYLIHFNGWNRSWDRWAAEDH). Disordered regions lie at residues 114–166 (KGLP…TRRE) and 298–409 (ATST…PSKE). The span at 139–149 (KDEEISEESDI) shows a compositional bias: acidic residues. Residues 150–166 (EEKTEVKEEPELQTRRE) show a composition bias toward basic and acidic residues. The 350-residue stretch at 168-517 (EERTITIEIP…CEAHYSTKNP (350 aa)) folds into the MRG domain. Residues 290–440 (FFLPIKESAT…WKLVPDNYPP (151 aa)) form a required for the histone acetyltransferase activity of the MSL complex region. A phosphoserine mark is found at Ser309 and Ser311. Residues 316 to 329 (NPSTPQSTESQPTT) show a composition bias toward low complexity. Phosphoserine occurs at positions 367 and 400. A Phosphothreonine modification is found at Thr405. A phosphoserine mark is found at Ser407 and Ser411.

As to quaternary structure, component of the MSL histone acetyltransferase complex at least composed of the KAT8/MOF, MSL1/hampin, MSL2 and MSL3. Interacts (via the MRG domain) with MSL1 and KAT8/MOF. In terms of tissue distribution, expressed in many tissues including liver, pancreas, heart, lung, kidney, skeletal muscle, brain, and placenta, with highest expression in skeletal muscle and heart.

Its subcellular location is the nucleus. Functionally, non-catalytic component of the MSL histone acetyltransferase complex, a multiprotein complex that mediates the majority of histone H4 acetylation at 'Lys-16' (H4K16ac), an epigenetic mark that prevents chromatin compaction. The MSL complex is required for chromosome stability and genome integrity by maintaining homeostatic levels of H4K16ac. The MSL complex is also involved in gene dosage by promoting up-regulation of genes expressed by the X chromosome. X up-regulation is required to compensate for autosomal biallelic expression. The MSL complex also participates in gene dosage compensation by promoting expression of Tsix non-coding RNA. Acts as a histone reader that specifically recognizes and binds histone H4 monomethylated at 'Lys-20' (H4K20Me1) in a DNA-dependent manner and is proposed to be involved in chromosomal targeting of the MSL complex. May play a role X inactivation in females. This Homo sapiens (Human) protein is MSL complex subunit 3.